The following is a 433-amino-acid chain: MAAPTGNGPVIPILGFLTCVAFIYLSFGDLWFGLKTEGELAFVKRNGTQFVVDGKALYVNGWNSYWFMDHAVNDHSRHRVSAMLEAGAKMGLTVCRTWAFNDGGYNALQISPGRFDERVFKALDHVIAEAKTHGVRLLLSLVNNLQAYGGKTQYVNWAWQEGVGLSSSNDSFFFDPSIRRYFKNYLTVLLTRKNSLTGIEYRNDPTIFAWELINEPRCMSDVSGDTLQDWINEMTAFIKSIDNKHLLTVGLEGFYGPSSPKKLTVNPERWASELGSDFVRNSDSPNIDFASVHIYPDHWFHDQGFEEKLKFVVKWMLSHIEDGDKELKKPVLFTEFGLSNLNKDYDPSQRDRFYRTIFDVIYKSAKRKRSGAGTLVWQFLIEGMEGFNDDFGIVPWEQDSIQRLMIEQSCRLSRITGRHLLDKKSIEMCSHRP.

The first 28 residues, 1 to 28 (MAAPTGNGPVIPILGFLTCVAFIYLSFG), serve as a signal peptide directing secretion. N46 is a glycosylation site (N-linked (GlcNAc...) asparagine). W98 lines the substrate pocket. N-linked (GlcNAc...) asparagine glycosylation occurs at N169. N214 serves as a coordination point for substrate. The active-site Proton donor is E215. Y295 contributes to the substrate binding site. E335 (nucleophile) is an active-site residue. Substrate is bound at residue W377.

Belongs to the glycosyl hydrolase 5 (cellulase A) family. Expressed in roots, stems, leaves and seeds.

It localises to the secreted. It carries out the reaction Random hydrolysis of (1-&gt;4)-beta-D-mannosidic linkages in mannans, galactomannans and glucomannans.. In Arabidopsis thaliana (Mouse-ear cress), this protein is Mannan endo-1,4-beta-mannosidase 2 (MAN2).